We begin with the raw amino-acid sequence, 493 residues long: GPI alpha-1,6-mannosyltransferase 2 (493 aa).

Over 1–13 (MGLLDPSQKEVLR) the chain is Cytoplasmic. The chain crosses the membrane as a helical span at residues 14–34 (FAVNCRILTLVLQALFNLIIP). The Lumenal portion of the chain corresponds to 35 to 77 (DHHADAFCPPRLAPSGSADQLVEGLLGGLSRWDAEHFLFIAEH). The helical transmembrane segment at 78–98 (GYLYEHNFAFFPGFPLALLMG) threads the bilayer. Residues 99–113 (TELLRPLQGLLSQRS) are Cytoplasmic-facing. A helical membrane pass occupies residues 114–134 (CLLVSVALLNLLFSVLAAVAL). The Lumenal portion of the chain corresponds to 135 to 136 (HD). Residues 137–157 (LGCLVLHCPRQALCAALLFCI) form a helical membrane-spanning segment. Residues 158 to 161 (SPAN) are Cytoplasmic-facing. The chain crosses the membrane as a helical span at residues 162–182 (VFLAAGYSEALFAFLTFSAMG). At 183–192 (QLERGRGWAS) the chain is on the lumenal side. A helical transmembrane segment spans residues 193-213 (GLLFALAAGVRSNGLVSLGFL). The Cytoplasmic portion of the chain corresponds to 214–234 (LHSQCRGFCSSLAVLSPWKPL). A helical membrane pass occupies residues 235-255 (VKLMASVCLSVLIVSLPFALF). Over 256–327 (QYRAYIQFCS…RYYELKQVPN (72 aa)) the chain is Lumenal. Residues 328 to 348 (FLLATPVTVLVVWATWTYVTT) traverse the membrane as a helical segment. Residues 349-378 (HPWLCLTLGLQRTKDRENPEKPHRGFLSPK) are Cytoplasmic-facing. The helical transmembrane segment at 379–399 (VFVYLVHAAALLVFGGLCMHV) threads the bilayer. Residues 400–469 (QVLTRFLASS…DWKRCSPVTR (70 aa)) lie on the Lumenal side of the membrane. The chain crosses the membrane as a helical span at residues 470 to 490 (CVLVYFLTYWLLGLILHCNFL). Topologically, residues 491-493 (PWT) are cytoplasmic.

The protein belongs to the PIGV family. Not N-glycosylated.

It localises to the endoplasmic reticulum membrane. Its pathway is glycolipid biosynthesis; glycosylphosphatidylinositol-anchor biosynthesis. In terms of biological role, alpha-1,6-mannosyltransferase that catalyzes the transfer of the second mannose, via an alpha-1,6 bond, from a dolichol-phosphate-mannose (Dol-P-Man) to the alpha-D-Man-(1-&gt;4)-alpha-D-GlcN-(1-&gt;6)-(1-radyl,2-acyl-sn-glycero-3-phospho)-2-acyl-inositol (also termed H2) intermediate to generate an alpha-D-Man-(1-&gt;6)-alpha-D-Man-(1-&gt;4)-alpha-D-GlcN-(1-&gt;6)-(1-radyl,2-acyl-sn-glycero-3-phospho)-2-acyl-inositol (also termed H3) and participates in the seventh step of the glycosylphosphatidylinositol-anchor biosynthesis. Also transfers the second mannose on a 2-PEtn-alpha-D-Man-(1-&gt;4)-alpha-D-GlcN-(1-&gt;6)-(1-radyl,2-acyl-sn-glycero-3-phospho)-2-acyl-inositol (also termed H5). This Mus musculus (Mouse) protein is GPI alpha-1,6-mannosyltransferase 2.